The primary structure comprises 437 residues: Elongation factor 1-gamma (437 aa).

Position 2 is an N-acetylalanine (Ala2). The GST N-terminal domain maps to 2–87; sequence AAGTLYTYPE…YVSNEELRGS (86 aa). Residues 88–216 enclose the GST C-terminal domain; the sequence is TPEAAAQVVQ…VKLCEKMAQF (129 aa). Lys147 and Lys212 each carry N6-acetyllysine. The span at 221-254 shows a compositional bias: basic and acidic residues; it reads FAETQPKKDTPRKEKGSREEKQKPQAERKEEKKA. The segment at 221–268 is disordered; sequence FAETQPKKDTPRKEKGSREEKQKPQAERKEEKKAAAPAPEEEMDECEQ. Residue Lys253 forms a Glycyl lysine isopeptide (Lys-Gly) (interchain with G-Cter in SUMO1) linkage. In terms of domain architecture, EF-1-gamma C-terminal spans 276–437; that stretch reads AKDPFAHLPK…KAFNQGKIFK (162 aa). A Glycyl lysine isopeptide (Lys-Gly) (interchain with G-Cter in SUMO2) cross-link involves residue Lys285. At Lys401 the chain carries N6-acetyllysine. Lys434 is subject to N6-acetyllysine; alternate. Lys434 is modified (N6-malonyllysine; alternate).

EF-1 is composed of four subunits: alpha, beta, delta, and gamma.

In terms of biological role, probably plays a role in anchoring the complex to other cellular components. The sequence is that of Elongation factor 1-gamma (EEF1G) from Macaca fascicularis (Crab-eating macaque).